A 429-amino-acid polypeptide reads, in one-letter code: Argininosuccinate lyase (429 aa).

It belongs to the lyase 1 family. Argininosuccinate lyase subfamily.

The protein resides in the cytoplasm. It carries out the reaction 2-(N(omega)-L-arginino)succinate = fumarate + L-arginine. Its pathway is amino-acid biosynthesis; L-arginine biosynthesis; L-arginine from L-ornithine and carbamoyl phosphate: step 3/3. The chain is Argininosuccinate lyase from Pyrobaculum neutrophilum (strain DSM 2338 / JCM 9278 / NBRC 100436 / V24Sta) (Thermoproteus neutrophilus).